Here is a 158-residue protein sequence, read N- to C-terminus: Inorganic pyrophosphatase (158 aa).

Residue E8 participates in Mg(2+) binding. Substrate is bound by residues K16, R30, and Y42. Mg(2+) contacts are provided by D52, D57, D84, and D89. Catalysis depends on D89, which acts as the Proton acceptor. Substrate is bound at residue Y125.

It belongs to the PPase family. As to quaternary structure, homohexamer. The cofactor is Mg(2+).

The protein resides in the cytoplasm. It carries out the reaction diphosphate + H2O = 2 phosphate + H(+). Catalyzes the hydrolysis of inorganic pyrophosphate (PPi) forming two phosphate ions. The chain is Inorganic pyrophosphatase from Corynebacterium glutamicum (strain ATCC 13032 / DSM 20300 / JCM 1318 / BCRC 11384 / CCUG 27702 / LMG 3730 / NBRC 12168 / NCIMB 10025 / NRRL B-2784 / 534).